A 1403-amino-acid chain; its full sequence is Baculoviral IAP repeat-containing protein 1f (1403 aa).

BIR repeat units follow at residues 60–127 (EAKR…CEFL), 159–227 (EEAR…CEFL), and 278–345 (EELR…CVFL). Residues Cys315, Cys318, His335, and Cys342 each contribute to the Zn(2+) site. Residues 464 to 759 (SVMCVEGEAG…EFLAAVRLTE (296 aa)) enclose the NACHT domain. 473 to 478 (GSGKTT) is an ATP binding site.

In terms of assembly, component of the NLRC4 inflammasome, at least composed of NLRC4, caspase-1 (CASP1) and some NAIP protein. As to quaternary structure, (Microbial infection) Interacts with S.typhimurium (Salmonella) flagellin.

Functionally, sensor component of the NLRC4 inflammasome that specifically recognizes and binds flagellin from pathogenic bacteria. Association of pathogenic bacteria proteins drives in turn drive assembly and activation of the NLRC4 inflammasome, promoting caspase-1 activation, cytokine production and macrophage pyroptosis. The NLRC4 inflammasome is activated as part of the innate immune response to a range of intracellular bacteria. The NLRC4 inflammasome senses Gram-negative bacteria such as L.pneumophila and P.aeruginosa, enteric pathogens S.typhimurium (Salmonella) and S.flexneri. May contribute to prevent motor-neuron apoptosis induced by a variety of signals. The sequence is that of Baculoviral IAP repeat-containing protein 1f (Naip6) from Mus musculus (Mouse).